The sequence spans 433 residues: 23S rRNA (uracil(1939)-C(5))-methyltransferase RlmD (433 aa).

Residues 10–68 (RTTTRQIITVSVNDLDSFGQGVARHNGKTLFIPGLLPQENAEVTVTEDKKQYARAKVVR) enclose the TRAM domain. [4Fe-4S] cluster contacts are provided by Cys-81, Cys-87, Cys-90, and Cys-162. Residues Gln-265, Phe-294, Asn-299, Glu-315, Asn-342, and Asp-363 each contribute to the S-adenosyl-L-methionine site. Cys-389 functions as the Nucleophile in the catalytic mechanism.

It belongs to the class I-like SAM-binding methyltransferase superfamily. RNA M5U methyltransferase family. RlmD subfamily.

It catalyses the reaction uridine(1939) in 23S rRNA + S-adenosyl-L-methionine = 5-methyluridine(1939) in 23S rRNA + S-adenosyl-L-homocysteine + H(+). Its function is as follows. Catalyzes the formation of 5-methyl-uridine at position 1939 (m5U1939) in 23S rRNA. In Shigella boydii serotype 4 (strain Sb227), this protein is 23S rRNA (uracil(1939)-C(5))-methyltransferase RlmD.